Here is an 874-residue protein sequence, read N- to C-terminus: AP-1 complex subunit gamma-1 (874 aa).

The GAE domain occupies 761-873 (TVAKSHTVYT…QDQTDWAQPS (113 aa)).

Belongs to the adaptor complexes large subunit family. In terms of assembly, adaptor protein complex 1 (AP-1) is a heterotetramer composed of two large adaptins (gamma-type subunit APL4 and beta-type subunit APL2), a medium adaptin (mu-type subunit APM1) and a small adaptin (sigma-type subunit APS1). AP-1 interacts with clathrin.

The protein localises to the cytoplasmic vesicle. It localises to the clathrin-coated vesicle membrane. The protein resides in the golgi apparatus. In terms of biological role, adaptins are components of the adaptor complexes which link clathrin to receptors in coated vesicles. Clathrin-associated protein complexes are believed to interact with the cytoplasmic tails of membrane proteins, leading to their selection and concentration. The AP-1 complex interacts directly with clathrin. Required for apical growth extension. The sequence is that of AP-1 complex subunit gamma-1 (APL4) from Mycosarcoma maydis (Corn smut fungus).